A 100-amino-acid polypeptide reads, in one-letter code: UPF0125 protein CV_3462 (100 aa).

The protein belongs to the UPF0125 (RnfH) family.

The chain is UPF0125 protein CV_3462 from Chromobacterium violaceum (strain ATCC 12472 / DSM 30191 / JCM 1249 / CCUG 213 / NBRC 12614 / NCIMB 9131 / NCTC 9757 / MK).